The primary structure comprises 358 residues: Histidinol-phosphate aminotransferase (358 aa).

Lysine 218 carries the N6-(pyridoxal phosphate)lysine modification.

Belongs to the class-II pyridoxal-phosphate-dependent aminotransferase family. Histidinol-phosphate aminotransferase subfamily. In terms of assembly, homodimer. Pyridoxal 5'-phosphate is required as a cofactor.

The catalysed reaction is L-histidinol phosphate + 2-oxoglutarate = 3-(imidazol-4-yl)-2-oxopropyl phosphate + L-glutamate. It participates in amino-acid biosynthesis; L-histidine biosynthesis; L-histidine from 5-phospho-alpha-D-ribose 1-diphosphate: step 7/9. The sequence is that of Histidinol-phosphate aminotransferase from Dehalococcoides mccartyi (strain ATCC BAA-2100 / JCM 16839 / KCTC 5957 / BAV1).